The primary structure comprises 548 residues: Synaptic vesicle 2-related protein (548 aa).

Residues 1 to 87 (MEDDLFQLRH…GFGKFQWKLS (87 aa)) lie on the Cytoplasmic side of the membrane. The helical transmembrane segment at 88–108 (MLTGLAWMADAMEMMILSILA) threads the bilayer. Residues 109–119 (PQLHCEWRLPS) are Vesicular-facing. The helical transmembrane segment at 120–140 (WQVALLTSVVFIGMMASSSLW) threads the bilayer. Residues 141–156 (GNVSDQYGRRTGLKIS) are Cytoplasmic-facing. A helical transmembrane segment spans residues 157 to 177 (VIWTLYYGILSAFAPVYSWIL). The Vesicular portion of the chain corresponds to 178 to 180 (VLR). A helical membrane pass occupies residues 181–201 (GLVGFGIGGVPQSVTLYAEFL). Topologically, residues 202–209 (PMKSRAKC) are cytoplasmic. The chain crosses the membrane as a helical span at residues 210–230 (ILLIEIFWALGTVFEVLLAIF). At 231 to 238 (VMPTLGWR) the chain is on the vesicular side. A helical transmembrane segment spans residues 239-259 (WLLILSALPLMLFAILCFWLP). Over 260-316 (ESARYEVLSGNQEKALATLKRIATENGAPMPLGKLIVSRQEDRGKIRDLFSPQFRCT) the chain is Cytoplasmic. A helical membrane pass occupies residues 317 to 337 (TLLLWFIWFSNAFSYYGLVLL). At 338–373 (TTELFQAGDVCSISNQRKAVKPKCSLACEYLTVEDY) the chain is on the vesicular side. The chain crosses the membrane as a helical span at residues 374-394 (TDLLWTTLSEFPGLLVTLWII). Residues 395-401 (DRVGRKK) lie on the Cytoplasmic side of the membrane. Residues 402–422 (TMAICFIIFSFSALLLFLCVG) form a helical membrane-spanning segment. Residues 423–424 (RN) are Vesicular-facing. Residues 425-445 (VLTVFLFIARAFISGGFQAAY) traverse the membrane as a helical segment. Over 446–457 (VYTPEVYPTATR) the chain is Cytoplasmic. A helical transmembrane segment spans residues 458 to 478 (ALGLGTCSGMARVGALITPFI). The Vesicular segment spans residues 479–486 (AQVMLESS). A helical membrane pass occupies residues 487–507 (IYLTVLVYSGCCVLAAVASCF). Residues 508–548 (LPIETKGRGLQESSHREWGQEMVGRGTHNVGATPSHSGSQE) are Cytoplasmic-facing. The disordered stretch occupies residues 519 to 548 (ESSHREWGQEMVGRGTHNVGATPSHSGSQE). A compositionally biased stretch (polar residues) spans 537–548 (VGATPSHSGSQE).

The protein belongs to the major facilitator superfamily. In terms of tissue distribution, detected in embryonic trigeminal ganglion and spinal cord.

It localises to the cytoplasmic vesicle. It is found in the secretory vesicle. Its subcellular location is the synaptic vesicle membrane. This is Synaptic vesicle 2-related protein (svop) from Xenopus laevis (African clawed frog).